Consider the following 154-residue polypeptide: Large ribosomal subunit protein uL15 (154 aa).

The segment covering 1–13 has biased composition (basic and acidic residues); it reads MKLNELRDHEGAT. The disordered stretch occupies residues 1–44; the sequence is MKLNELRDHEGATKNRKRIGRGIGSGTGKTGGCGVKGQKSRSGV. The segment covering 21-35 has biased composition (gly residues); sequence RGIGSGTGKTGGCGV.

Belongs to the universal ribosomal protein uL15 family. In terms of assembly, part of the 50S ribosomal subunit.

Functionally, binds to the 23S rRNA. This Bartonella bacilliformis (strain ATCC 35685 / KC583 / Herrer 020/F12,63) protein is Large ribosomal subunit protein uL15.